The sequence spans 318 residues: Glutathione synthetase (318 aa).

The 187-residue stretch at 124 to 310 (EKLFTAWFPE…ITGKLMDAIE (187 aa)) folds into the ATP-grasp domain. 150 to 207 (FREQHGDVILKPLDGMGGASIFRVKEGDPNLSVIIETLTNHGQNYCMAQTFVPDISNG) is an ATP binding site. The Mg(2+) site is built by Glu-281 and Asn-283.

This sequence belongs to the prokaryotic GSH synthase family. Mg(2+) serves as cofactor. It depends on Mn(2+) as a cofactor.

It carries out the reaction gamma-L-glutamyl-L-cysteine + glycine + ATP = glutathione + ADP + phosphate + H(+). The protein operates within sulfur metabolism; glutathione biosynthesis; glutathione from L-cysteine and L-glutamate: step 2/2. The sequence is that of Glutathione synthetase from Vibrio cholerae serotype O1 (strain ATCC 39315 / El Tor Inaba N16961).